We begin with the raw amino-acid sequence, 684 residues long: Sec1 family domain-containing protein 2 (684 aa).

The protein belongs to the STXBP/unc-18/SEC1 family.

In terms of biological role, may be involved in protein transport. This Mus musculus (Mouse) protein is Sec1 family domain-containing protein 2 (Scfd2).